Here is a 791-residue protein sequence, read N- to C-terminus: Biofilm architecture maintenance protein MbaA (791 aa).

A signal peptide spans methionine 1–serine 23. Topologically, residues tyrosine 24 to glutamate 259 are periplasmic. A helical transmembrane segment spans residues leucine 260–tyrosine 280. The region spanning arginine 281–glutamine 333 is the HAMP domain. The Cytoplasmic segment spans residues arginine 281–arginine 791. Residues glutamine 368–glutamine 509 enclose the GGDEF domain. One can recognise an EAL domain in the interval arginine 518 to asparagine 769.

It is found in the cell inner membrane. Plays an essential role in the maintenance and the formation of the three-dimensional structure of the biofilms at the later stages of their development. Absence of mbaA promotes the accumulation of larger amount of biomass on the surfaces at later stage of development, results in the overproduction of an extracellular polymeric substance that accumulates in the matrix of biofilms. This yields biofilms lacking the typical structure consisting of pillars of cells separated by fluid filled channels. This Vibrio cholerae serotype O1 (strain ATCC 39315 / El Tor Inaba N16961) protein is Biofilm architecture maintenance protein MbaA (mbaA).